The primary structure comprises 285 residues: CCR4-NOT transcription complex subunit 7 (285 aa).

Asp-40, Glu-42, Asp-161, Asp-230, and Glu-278 together coordinate a divalent metal cation.

It belongs to the CAF1 family. As to quaternary structure, component of the CCR4-NOT complex. The cofactor is Mn(2+). Mg(2+) is required as a cofactor. It depends on Co(2+) as a cofactor.

It is found in the nucleus. Its subcellular location is the cytoplasm. The enzyme catalyses Exonucleolytic cleavage of poly(A) to 5'-AMP.. In terms of biological role, has 3'-5' poly(A) exoribonuclease activity for synthetic poly(A) RNA substrate. Catalytic component of the CCR4-NOT complex which is one of the major cellular mRNA deadenylases and is linked to various cellular processes including bulk mRNA degradation, miRNA-mediated repression, translational repression during translational initiation and general transcription regulation. During miRNA-mediated repression the complex also seems to act as translational repressor during translational initiation. Additional complex functions may be a consequence of its influence on mRNA expression. In Gallus gallus (Chicken), this protein is CCR4-NOT transcription complex subunit 7 (CNOT7).